The chain runs to 132 residues: Small ribosomal subunit protein uS9 (132 aa).

It belongs to the universal ribosomal protein uS9 family.

In Leptospira borgpetersenii serovar Hardjo-bovis (strain JB197), this protein is Small ribosomal subunit protein uS9.